Reading from the N-terminus, the 70-residue chain is Neuropeptide SIFamide (70 aa).

Residues 1–22 form the signal peptide; sequence MRFIVALCLFAIVMCIIHKAEG. Position 34 is a phenylalanine amide (F34). Positions 38 to 70 are excised as a propeptide; the sequence is GVVEYDTTGRALSALCEIASETCQAWYQTLENK.

As to expression, expressed in antennal lobe (AL) and gnathal ganglion (GNG) with expression detected in most animals (at protein level). Not expressed in corpora cardiaca (CC) and corpora allata (CA) (at protein level).

The protein resides in the secreted. In terms of biological role, ligand for the neuropeptide SIFamide receptor. This Agrotis ipsilon (Black cutworm moth) protein is Neuropeptide SIFamide.